Reading from the N-terminus, the 325-residue chain is Eukaryotic translation initiation factor 3 subunit I (325 aa).

WD repeat units lie at residues 8–47, 50–89, 144–183, 186–225, and 283–324; these read GHER…RLGT, GHTG…QLAL, CSDS…QLSN, EHTK…HLKT, and GHFG…FEFE.

Belongs to the eIF-3 subunit I family. As to quaternary structure, component of the eukaryotic translation initiation factor 3 (eIF-3) complex, which is composed of 13 subunits: EIF3A, EIF3B, EIF3C, EIF3D, EIF3E, EIF3F, EIF3G, EIF3H, EIF3I, EIF3J, EIF3K, EIF3L and EIF3M.

It is found in the cytoplasm. In terms of biological role, component of the eukaryotic translation initiation factor 3 (eIF-3) complex, which is involved in protein synthesis of a specialized repertoire of mRNAs and, together with other initiation factors, stimulates binding of mRNA and methionyl-tRNAi to the 40S ribosome. The eIF-3 complex specifically targets and initiates translation of a subset of mRNAs involved in cell proliferation. This chain is Eukaryotic translation initiation factor 3 subunit I, found in Taeniopygia guttata (Zebra finch).